Consider the following 619-residue polypeptide: DNA mismatch repair protein MutL (619 aa).

A compositionally biased stretch (basic and acidic residues) spans 368 to 378 (VDEPKQVDEPK). Residues 368–403 (VDEPKQVDEPKQSSPVQEPKEEIPSFLPTVESKQND) are disordered.

The protein belongs to the DNA mismatch repair MutL/HexB family.

This protein is involved in the repair of mismatches in DNA. It is required for dam-dependent methyl-directed DNA mismatch repair. May act as a 'molecular matchmaker', a protein that promotes the formation of a stable complex between two or more DNA-binding proteins in an ATP-dependent manner without itself being part of a final effector complex. In Geobacillus sp. (strain WCH70), this protein is DNA mismatch repair protein MutL.